The sequence spans 201 residues: Recombination protein RecR (201 aa).

The C4-type zinc finger occupies 57–72 (CADCRTFTEQDVCNIC). Positions 81-176 (GQICVVESPA…EASRIAHGVP (96 aa)) constitute a Toprim domain.

Belongs to the RecR family.

Functionally, may play a role in DNA repair. It seems to be involved in an RecBC-independent recombinational process of DNA repair. It may act with RecF and RecO. This chain is Recombination protein RecR, found in Salmonella agona (strain SL483).